Reading from the N-terminus, the 55-residue chain is Large ribosomal subunit protein bL33 (55 aa).

This sequence belongs to the bacterial ribosomal protein bL33 family.

This chain is Large ribosomal subunit protein bL33, found in Deinococcus deserti (strain DSM 17065 / CIP 109153 / LMG 22923 / VCD115).